A 132-amino-acid chain; its full sequence is Small ribosomal subunit protein uS8 (132 aa).

The protein belongs to the universal ribosomal protein uS8 family. Part of the 30S ribosomal subunit. Contacts proteins S5 and S12.

Its function is as follows. One of the primary rRNA binding proteins, it binds directly to 16S rRNA central domain where it helps coordinate assembly of the platform of the 30S subunit. The sequence is that of Small ribosomal subunit protein uS8 from Brucella abortus (strain S19).